A 140-amino-acid chain; its full sequence is MMDIREIQAALPHRYPMLLVDRVLEVSDDHIVAIKNVTINEPFFNGHFPHYPVMPGVLIMEALAQTAGVLELSKEENKGKLVFYAGMDKVKFKKQVVPGDQLVMTATFIKRRGTIAVVEARAEVDGKLAASGTLTFACGQ.

The active site involves histidine 47.

Belongs to the thioester dehydratase family. FabZ subfamily.

The protein resides in the cytoplasm. It catalyses the reaction a (3R)-hydroxyacyl-[ACP] = a (2E)-enoyl-[ACP] + H2O. Functionally, involved in unsaturated fatty acids biosynthesis. Catalyzes the dehydration of short chain beta-hydroxyacyl-ACPs and long chain saturated and unsaturated beta-hydroxyacyl-ACPs. The chain is 3-hydroxyacyl-[acyl-carrier-protein] dehydratase FabZ from Streptococcus pyogenes serotype M49 (strain NZ131).